Here is a 276-residue protein sequence, read N- to C-terminus: Phosphonates import ATP-binding protein PhnC (276 aa).

An ABC transporter domain is found at 5–253; sequence IRVERLNKTF…LLNDLYGADL (249 aa). 37 to 44 is a binding site for ATP; it reads GASGSGKS.

The protein belongs to the ABC transporter superfamily. Phosphonates importer (TC 3.A.1.9.1) family. In terms of assembly, the complex is composed of two ATP-binding proteins (PhnC), two transmembrane proteins (PhnE) and a solute-binding protein (PhnD).

Its subcellular location is the cell inner membrane. It carries out the reaction phosphonate(out) + ATP + H2O = phosphonate(in) + ADP + phosphate + H(+). Functionally, part of the ABC transporter complex PhnCDE involved in phosphonates import. Responsible for energy coupling to the transport system. This is Phosphonates import ATP-binding protein PhnC from Stutzerimonas stutzeri (Pseudomonas stutzeri).